A 219-amino-acid chain; its full sequence is Small ribosomal subunit protein uS5 (219 aa).

The tract at residues 1-32 is disordered; that stretch reads MSHPQSRPGGRDGRPRRRREPREEAPWVPKTA. Residues 68–131 form the S5 DRBM domain; that stretch reads LKTEVVDVGI…NQALLNVGPI (64 aa).

Belongs to the universal ribosomal protein uS5 family. Part of the 30S ribosomal subunit. Contacts protein S4.

Functionally, with S4 and S12 plays an important role in translational accuracy. The sequence is that of Small ribosomal subunit protein uS5 (rps5) from Cenarchaeum symbiosum (strain A).